The sequence spans 302 residues: tRNA-cytidine(32) 2-sulfurtransferase (302 aa).

The PP-loop motif signature appears at 45-50; it reads SGGKDS. [4Fe-4S] cluster-binding residues include cysteine 120, cysteine 123, and cysteine 211.

The protein belongs to the TtcA family. As to quaternary structure, homodimer. Mg(2+) serves as cofactor. [4Fe-4S] cluster is required as a cofactor.

It is found in the cytoplasm. The enzyme catalyses cytidine(32) in tRNA + S-sulfanyl-L-cysteinyl-[cysteine desulfurase] + AH2 + ATP = 2-thiocytidine(32) in tRNA + L-cysteinyl-[cysteine desulfurase] + A + AMP + diphosphate + H(+). The protein operates within tRNA modification. Catalyzes the ATP-dependent 2-thiolation of cytidine in position 32 of tRNA, to form 2-thiocytidine (s(2)C32). The sulfur atoms are provided by the cysteine/cysteine desulfurase (IscS) system. This chain is tRNA-cytidine(32) 2-sulfurtransferase, found in Aeromonas hydrophila subsp. hydrophila (strain ATCC 7966 / DSM 30187 / BCRC 13018 / CCUG 14551 / JCM 1027 / KCTC 2358 / NCIMB 9240 / NCTC 8049).